The following is a 146-amino-acid chain: Catabolic 3-dehydroquinase (146 aa).

The active-site Proton acceptor is tyrosine 24. Substrate contacts are provided by asparagine 78, histidine 84, and aspartate 91. Histidine 104 functions as the Proton donor in the catalytic mechanism. Substrate-binding positions include 105–106 (IT) and arginine 115.

Belongs to the type-II 3-dehydroquinase family. As to quaternary structure, homododecamer. Adopts a ring-like structure, composed of an arrangement of two hexameric rings stacked on top of one another.

It carries out the reaction 3-dehydroquinate = 3-dehydroshikimate + H2O. The protein operates within aromatic compound metabolism; 3,4-dihydroxybenzoate biosynthesis; 3,4-dihydroxybenzoate from 3-dehydroquinate: step 1/2. Is involved in the catabolism of quinate. Allows the utilization of quinate as carbon source via the beta-ketoadipate pathway. The polypeptide is Catabolic 3-dehydroquinase (Candida dubliniensis (strain CD36 / ATCC MYA-646 / CBS 7987 / NCPF 3949 / NRRL Y-17841) (Yeast)).